Consider the following 438-residue polypeptide: Dol-P-Man:Man(5)GlcNAc(2)-PP-Dol alpha-1,3-mannosyltransferase (438 aa).

Position 13 is a phosphoserine (Ser13). Transmembrane regions (helical) follow at residues 41 to 61, 95 to 115, 123 to 143, 149 to 169, 172 to 192, 203 to 223, 231 to 251, 289 to 309, 332 to 352, 356 to 376, and 407 to 427; these read YTLLVASCLCIAEVGITFWVI, TGPLVYPAGFLYIFTGLFYAT, MAQNIFAVLYLVTLVLVFLIY, VPPFVFFFMCCASYRVHSIFV, LFNDPVAMALLFLSINLFLAQ, LAVSVKMNVLLFAPGLLFLLL, ALPKLAICAALQVVLGLPFLL, FHLALLAAHLSLLLLFALCRW, ALTPNQIVSILFTSNFIGICF, LHYQFYVWYFHTLPYLLWAMP, and AALHLCHAVVLLQLWLSPESF.

The protein belongs to the glycosyltransferase ALG3 family.

It is found in the endoplasmic reticulum membrane. The enzyme catalyses an alpha-D-Man-(1-&gt;2)-alpha-D-Man-(1-&gt;2)-alpha-D-Man-(1-&gt;3)-[alpha-D-Man-(1-&gt;6)]-beta-D-Man-(1-&gt;4)-beta-D-GlcNAc-(1-&gt;4)-alpha-D-GlcNAc-diphospho-di-trans,poly-cis-dolichol + a di-trans,poly-cis-dolichyl beta-D-mannosyl phosphate = an alpha-D-Man-(1-&gt;2)-alpha-D-Man-(1-&gt;2)-alpha-D-Man-(1-&gt;3)-[alpha-D-Man-(1-&gt;3)-alpha-D-Man-(1-&gt;6)]-beta-D-Man-(1-&gt;4)-beta-D-GlcNAc-(1-&gt;4)-alpha-D-GlcNAc-diphospho-di-trans,poly-cis-dolichol + a di-trans,poly-cis-dolichyl phosphate + H(+). It participates in protein modification; protein glycosylation. In terms of biological role, dol-P-Man:Man(5)GlcNAc(2)-PP-Dol alpha-1,3-mannosyltransferase that operates in the biosynthetic pathway of dolichol-linked oligosaccharides, the glycan precursors employed in protein asparagine (N)-glycosylation. The assembly of dolichol-linked oligosaccharides begins on the cytosolic side of the endoplasmic reticulum membrane and finishes in its lumen. The sequential addition of sugars to dolichol pyrophosphate produces dolichol-linked oligosaccharides containing fourteen sugars, including two GlcNAcs, nine mannoses and three glucoses. Once assembled, the oligosaccharide is transferred from the lipid to nascent proteins by oligosaccharyltransferases. In the lumen of the endoplasmic reticulum, adds the first dolichyl beta-D-mannosyl phosphate derived mannose in an alpha-1,3 linkage to Man(5)GlcNAc(2)-PP-dolichol to produce Man(6)GlcNAc(2)-PP-dolichol. Man(6)GlcNAc(2)-PP-dolichol is a substrate for ALG9, the following enzyme in the biosynthetic pathway. This chain is Dol-P-Man:Man(5)GlcNAc(2)-PP-Dol alpha-1,3-mannosyltransferase, found in Mus musculus (Mouse).